Consider the following 376-residue polypeptide: Alcohol dehydrogenase class-3 (376 aa).

Ala1 bears the N-acetylalanine mark. Residues Cys47, His69, Cys99, Cys102, Cys105, Cys113, and Cys176 each contribute to the Zn(2+) site.

Belongs to the zinc-containing alcohol dehydrogenase family. Class-III subfamily. In terms of assembly, homodimer. Zn(2+) serves as cofactor.

It is found in the cytoplasm. The enzyme catalyses a primary alcohol + NAD(+) = an aldehyde + NADH + H(+). The catalysed reaction is a secondary alcohol + NAD(+) = a ketone + NADH + H(+). It carries out the reaction S-(hydroxymethyl)glutathione + NADP(+) = S-formylglutathione + NADPH + H(+). It catalyses the reaction S-(hydroxymethyl)glutathione + NAD(+) = S-formylglutathione + NADH + H(+). The enzyme catalyses S-nitrosoglutathione + NADH + H(+) = S-(hydroxysulfenamide)glutathione + NAD(+). Functionally, class-III ADH is remarkably ineffective in oxidizing ethanol, but it readily catalyzes the oxidation of long-chain primary alcohols and the oxidation of S-(hydroxymethyl) glutathione. Also acts as a S-nitroso-glutathione reductase by catalyzing the NADH-dependent reduction of S-nitrosoglutathione, thereby regulating protein S-nitrosylation. The protein is Alcohol dehydrogenase class-3 of Scyliorhinus canicula (Small-spotted catshark).